The following is a 256-amino-acid chain: Phosphomannomutase (256 aa).

Aspartate 12 acts as the Nucleophile in catalysis. Residues aspartate 12 and aspartate 14 each contribute to the Mg(2+) site. Aspartate 14 (proton donor/acceptor) is an active-site residue. The alpha-D-mannose 1-phosphate site is built by arginine 21, arginine 123, arginine 134, arginine 141, serine 179, and aspartate 181. Mg(2+) is bound at residue aspartate 209.

The protein belongs to the eukaryotic PMM family. As to quaternary structure, homodimer.

It localises to the cytoplasm. The catalysed reaction is alpha-D-mannose 1-phosphate = D-mannose 6-phosphate. It participates in nucleotide-sugar biosynthesis; GDP-alpha-D-mannose biosynthesis; alpha-D-mannose 1-phosphate from D-fructose 6-phosphate: step 2/2. Functionally, involved in the synthesis of the GDP-mannose and dolichol-phosphate-mannose required for a number of critical mannosyl transfer reactions. This chain is Phosphomannomutase (SEC53), found in Encephalitozoon cuniculi (strain GB-M1) (Microsporidian parasite).